A 102-amino-acid chain; its full sequence is Heat shock protein HspQ (102 aa).

Belongs to the HspQ family.

The protein resides in the cytoplasm. Functionally, involved in the degradation of certain denaturated proteins, including DnaA, during heat shock stress. The protein is Heat shock protein HspQ of Pectobacterium atrosepticum (strain SCRI 1043 / ATCC BAA-672) (Erwinia carotovora subsp. atroseptica).